The following is a 302-amino-acid chain: Aquaporin NIP3-1 (302 aa).

The tract at residues M1 to D31 is disordered. Residues P7–P21 show a composition bias toward low complexity. The next 2 helical transmembrane spans lie at L76–V96 and G102–L122. Positions N133–S135 match the NPA 1 motif. 3 helical membrane passes run L149 to L169, A193 to T213, and A217 to A237. Residues N246–V248 carry the NPA 2 motif. The helical transmembrane segment at W264–V284 threads the bilayer.

It belongs to the MIP/aquaporin (TC 1.A.8) family. NIP (TC 1.A.8.12) subfamily.

It is found in the membrane. Functionally, aquaporins facilitate the transport of water and small neutral solutes across cell membranes. This is Aquaporin NIP3-1 (NIP3-1) from Zea mays (Maize).